We begin with the raw amino-acid sequence, 195 residues long: dITP/XTP pyrophosphatase (195 aa).

8–13 (SGNAGK) lines the substrate pocket. Mg(2+) is bound by residues Glu38 and Asp67. Catalysis depends on Asp67, which acts as the Proton acceptor. Substrate contacts are provided by residues Ser68, 146–149 (FGYD), Lys169, and 174–175 (HR).

The protein belongs to the HAM1 NTPase family. As to quaternary structure, homodimer. It depends on Mg(2+) as a cofactor.

The catalysed reaction is XTP + H2O = XMP + diphosphate + H(+). The enzyme catalyses dITP + H2O = dIMP + diphosphate + H(+). It catalyses the reaction ITP + H2O = IMP + diphosphate + H(+). Its function is as follows. Pyrophosphatase that catalyzes the hydrolysis of nucleoside triphosphates to their monophosphate derivatives, with a high preference for the non-canonical purine nucleotides XTP (xanthosine triphosphate), dITP (deoxyinosine triphosphate) and ITP. Seems to function as a house-cleaning enzyme that removes non-canonical purine nucleotides from the nucleotide pool, thus preventing their incorporation into DNA/RNA and avoiding chromosomal lesions. This Parasynechococcus marenigrum (strain WH8102) protein is dITP/XTP pyrophosphatase.